Consider the following 293-residue polypeptide: Movement protein BC1 (293 aa).

It belongs to the begomovirus movement protein BC1 family. Binds to dimeric supercoiled plasmid DNA. In terms of processing, phosphorylated.

It is found in the host cell membrane. The protein resides in the host microsome membrane. It localises to the host endoplasmic reticulum membrane. Functionally, transports viral genome to neighboring plant cells directly through plasmosdesmata, without any budding. The movement protein allows efficient cell to cell propagation, by bypassing the host cell wall barrier. Begomovirus genome is shuttled out of nucleus by Nuclear shuttle protein (NSP) and the movement protein transports the DNA-NSP complex to cell plasmodesmata and facilitates further movement across the cell wall. The polypeptide is Movement protein BC1 (Macroptilium lathyroides (Lima bean)).